Reading from the N-terminus, the 256-residue chain is 5'-nucleotidase SurE (256 aa).

A divalent metal cation is bound by residues Asp-8, Asp-9, Ser-40, and Asn-94.

The protein belongs to the SurE nucleotidase family. A divalent metal cation is required as a cofactor.

It localises to the cytoplasm. The catalysed reaction is a ribonucleoside 5'-phosphate + H2O = a ribonucleoside + phosphate. Nucleotidase that shows phosphatase activity on nucleoside 5'-monophosphates. This is 5'-nucleotidase SurE from Wolbachia pipientis subsp. Culex pipiens (strain wPip).